Consider the following 113-residue polypeptide: Iron-sulfur cluster assembly protein CyaY (113 aa).

It belongs to the frataxin family.

Involved in iron-sulfur (Fe-S) cluster assembly. May act as a regulator of Fe-S biogenesis. The protein is Iron-sulfur cluster assembly protein CyaY of Ralstonia nicotianae (strain ATCC BAA-1114 / GMI1000) (Ralstonia solanacearum).